A 397-amino-acid chain; its full sequence is Erythromycin C-12 hydroxylase (397 aa).

74–75 (HE) is a substrate binding site. Residues His81 and Arg85 each contribute to the heme site. Gln278 provides a ligand contact to substrate. Arg279 is a heme binding site. A compositionally biased stretch (basic and acidic residues) spans 307–322 (RDSDAHDDPDRFDPSR). The tract at residues 307–326 (RDSDAHDDPDRFDPSRKSGG) is disordered. Heme-binding residues include His337 and Cys339.

This sequence belongs to the cytochrome P450 family. In terms of assembly, monomer. Heme b is required as a cofactor.

The catalysed reaction is erythromycin D + NADPH + O2 + H(+) = erythromycin C + NADP(+) + H2O. It participates in antibiotic biosynthesis; erythromycin biosynthesis. Functionally, responsible for the C-12 hydroxylation of the macrolactone ring of erythromycin. Thus, EryK catalyzes the hydroxylation of erythromycin D (ErD) at the C-12 position to produce erythromycin C (ErC). Erythromycin B (ErB) is not a substrate for this enzyme. This chain is Erythromycin C-12 hydroxylase (eryK), found in Saccharopolyspora erythraea (strain ATCC 11635 / DSM 40517 / JCM 4748 / NBRC 13426 / NCIMB 8594 / NRRL 2338).